The chain runs to 381 residues: Terpene cyclase ATR13 (381 aa).

It belongs to the terpene synthase family.

It functions in the pathway mycotoxin biosynthesis. Functionally, terpene cyclase; part of the core atranone cluster (CAC) which products are predicted to catalyze most or all steps of mycotoxin atranone synthesis, starting from geranylgeranyl pyrophosphate (GGPP). The initial cyclization of GGPP to dolabellane is probably performed by the terpene cyclase ATR13. The Baeyer-Villiger oxidation near the end of the atranone synthesis, which converts atranones D and E to atranones F and G is predicted to be catalyzed by the monooxygenase ATR8. Of the CAC's other predicted gene products, the reducing PKS ATR6 might synthesize a polyketide chain. This polyketide is probably transferred onto the atranone backbone by the polyketide transferase ATR5. Other predicted CAC products include 4 oxygenases (ATR2, ATR3, ATR4, and ATR14), 3 short-chain reductases (ATR7, ATR9, and ATR10), and a methyltransferase (ATR12). These may all be involved in the various steps of atranone biosynthesis, although their specific roles must await experimental determination. The polypeptide is Terpene cyclase ATR13 (Stachybotrys chlorohalonatus (strain IBT 40285)).